The following is a 430-amino-acid chain: tRNA(Ile)-lysidine synthase (430 aa).

Position 21–26 (21–26 (SGGLDS)) interacts with ATP.

This sequence belongs to the tRNA(Ile)-lysidine synthase family.

The protein resides in the cytoplasm. It carries out the reaction cytidine(34) in tRNA(Ile2) + L-lysine + ATP = lysidine(34) in tRNA(Ile2) + AMP + diphosphate + H(+). Functionally, ligates lysine onto the cytidine present at position 34 of the AUA codon-specific tRNA(Ile) that contains the anticodon CAU, in an ATP-dependent manner. Cytidine is converted to lysidine, thus changing the amino acid specificity of the tRNA from methionine to isoleucine. The chain is tRNA(Ile)-lysidine synthase from Salmonella agona (strain SL483).